The primary structure comprises 408 residues: Probable serine/threonine-protein kinase PBL16 (408 aa).

G2 carries N-myristoyl glycine lipidation. The S-palmitoyl cysteine moiety is linked to residue C4. Residues 17 to 50 (ANAKSESPKEQSPTVEDKHIKEVQKLPSNPKEVE) are disordered. The span at 18–30 (NAKSESPKEQSPT) shows a compositional bias: polar residues. The segment covering 31 to 40 (VEDKHIKEVQ) has biased composition (basic and acidic residues). T65 carries the phosphothreonine modification. The Protein kinase domain maps to 76–360 (FRQDRVLGGG…DIVDSLEPLQ (285 aa)). ATP is bound by residues 82–90 (LGGGGFGSV) and K113. At Y159 the chain carries Phosphotyrosine. D209 serves as the catalytic Proton acceptor. A phosphoserine mark is found at S213 and S243. T244 and T249 each carry phosphothreonine. Y257 carries the post-translational modification Phosphotyrosine.

The protein belongs to the protein kinase superfamily. Ser/Thr protein kinase family. Palmitoylation at Cys-4 and Cys-6 are required for plasma membrane location.

It is found in the cell membrane. The catalysed reaction is L-seryl-[protein] + ATP = O-phospho-L-seryl-[protein] + ADP + H(+). It carries out the reaction L-threonyl-[protein] + ATP = O-phospho-L-threonyl-[protein] + ADP + H(+). In terms of biological role, may be involved in plant defense signaling. In Arabidopsis thaliana (Mouse-ear cress), this protein is Probable serine/threonine-protein kinase PBL16.